We begin with the raw amino-acid sequence, 90 residues long: MSRTIFCTFLKKEAEGQDFQLYPGEIGKRIYNEISKEAWSQWVTKQTMLINEKKLSMMNVEDRKLLEQEMVNFLFEGQDVHIEGYTPPSQ.

This sequence belongs to the Fe(2+)-trafficking protein family. In terms of assembly, monomer.

Its function is as follows. Could be a mediator in iron transactions between iron acquisition and iron-requiring processes, such as synthesis and/or repair of Fe-S clusters in biosynthetic enzymes. The sequence is that of Probable Fe(2+)-trafficking protein from Yersinia enterocolitica serotype O:8 / biotype 1B (strain NCTC 13174 / 8081).